The chain runs to 684 residues: Protein LDB19 (684 aa).

Disordered regions lie at residues 462–483 (GEAQ…PAGL), 510–531 (SAEE…DKRI), and 593–632 (SSRV…TSGS). Residues 593–602 (SSRVVSGPES) are compositionally biased toward low complexity.

Belongs to the LDB19 family.

It is found in the cytoplasm. The protein localises to the golgi apparatus. Its function is as follows. May be involved in protein-linked oligosaccharide phosphorylation. This Eremothecium gossypii (strain ATCC 10895 / CBS 109.51 / FGSC 9923 / NRRL Y-1056) (Yeast) protein is Protein LDB19 (LDB19).